The chain runs to 59 residues: Large ribosomal subunit protein bL32 (59 aa).

The disordered stretch occupies residues 1 to 23; it reads MAVQQNKKSPSKRGMHRSHDFLT.

It belongs to the bacterial ribosomal protein bL32 family.

The polypeptide is Large ribosomal subunit protein bL32 (Burkholderia multivorans (strain ATCC 17616 / 249)).